Reading from the N-terminus, the 1007-residue chain is Sal-like protein 2 (1007 aa).

The disordered stretch occupies residues 1–33; sequence MSRRKQRKPQQLISDCEGPSASENGDASEEDHP. The C2H2-type 1; atypical zinc finger occupies 34–56; sequence QVCAKCCAQFTDPTEFLAHQNAC. Disordered regions lie at residues 59 to 121, 137 to 177, 220 to 243, and 286 to 306; these read DPPV…GEES, GGGL…SGHL, PASP…PLFS, and PFSA…SPAL. Low complexity predominate over residues 70–80; it reads ENPNNSSASSE. A compositionally biased stretch (polar residues) spans 99-108; that stretch reads PPDSGSSVPT. The segment covering 151 to 171 has biased composition (pro residues); sequence PLPPESTPAPPPPPPPPPPPG. Serine 243 carries the phosphoserine modification. 2 C2H2-type zinc fingers span residues 373–395 and 401–423; these read HKCR…LRSH and YKCN…FHRH. Disordered regions lie at residues 520-540 and 610-629; these read KNKA…SGVA and AASG…ASSG. C2H2-type zinc fingers lie at residues 631 to 653, 659 to 681, and 691 to 713; these read NQCV…YGQH, FKCK…FVGH, and NSCP…VRMH. The segment at 714–886 is disordered; that stretch reads LGGQIPNGGT…SALTPEGEAT (173 aa). Polar residues predominate over residues 734–744; sequence ENGSEQSTVSG. Over residues 747–757 the composition is skewed to low complexity; it reads SFPQQQSQQPS. Residues 758–782 show a composition bias toward acidic residues; that stretch reads PEEELSEEEEEEDEEEEEDVTDEDS. Phosphoserine is present on residues serine 797, serine 802, and serine 806. The span at 803–812 shows a compositional bias: acidic residues; the sequence is EEASGAEEEV. A compositionally biased stretch (basic and acidic residues) spans 862 to 871; sequence GKEEGGKPER. Lysine 911 participates in a covalent cross-link: Glycyl lysine isopeptide (Lys-Gly) (interchain with G-Cter in ubiquitin). C2H2-type zinc fingers lie at residues 911 to 933 and 940 to 963; these read KACE…QKTH and FTCV…LLAH.

This sequence belongs to the sal C2H2-type zinc-finger protein family. Highest levels in adult brain (in different areas). Lower levels in heart; very low levels in kidney and pancreas. Expressed throughout the retina and lens vesicle as well as the periocular mesenchyme.

The protein resides in the nucleus. Functionally, probable transcription factor that plays a role in eye development before, during, and after optic fissure closure. The polypeptide is Sal-like protein 2 (SALL2) (Homo sapiens (Human)).